The following is a 251-amino-acid chain: Ubiquinone/menaquinone biosynthesis C-methyltransferase UbiE (251 aa).

S-adenosyl-L-methionine contacts are provided by residues threonine 74, aspartate 95, and 123–124; that span reads NA.

It belongs to the class I-like SAM-binding methyltransferase superfamily. MenG/UbiE family.

The catalysed reaction is a 2-demethylmenaquinol + S-adenosyl-L-methionine = a menaquinol + S-adenosyl-L-homocysteine + H(+). It catalyses the reaction a 2-methoxy-6-(all-trans-polyprenyl)benzene-1,4-diol + S-adenosyl-L-methionine = a 5-methoxy-2-methyl-3-(all-trans-polyprenyl)benzene-1,4-diol + S-adenosyl-L-homocysteine + H(+). Its pathway is quinol/quinone metabolism; menaquinone biosynthesis; menaquinol from 1,4-dihydroxy-2-naphthoate: step 2/2. It functions in the pathway cofactor biosynthesis; ubiquinone biosynthesis. Its function is as follows. Methyltransferase required for the conversion of demethylmenaquinol (DMKH2) to menaquinol (MKH2) and the conversion of 2-polyprenyl-6-methoxy-1,4-benzoquinol (DDMQH2) to 2-polyprenyl-3-methyl-6-methoxy-1,4-benzoquinol (DMQH2). The chain is Ubiquinone/menaquinone biosynthesis C-methyltransferase UbiE from Shewanella frigidimarina (strain NCIMB 400).